A 202-amino-acid polypeptide reads, in one-letter code: ER membrane protein complex subunit 7 homolog (202 aa).

The N-terminal stretch at 1–23 is a signal peptide; that stretch reads MAPIFRSTSLIAFSLFFFFFAST. Residues 148-168 traverse the membrane as a helical segment; that stretch reads IVKSPMGLMVGFMVVVVFLMP. The tract at residues 179–202 is disordered; the sequence is MKSAQEQMRSQGVPSLTSLLPASR. Residues 182–202 are compositionally biased toward polar residues; sequence AQEQMRSQGVPSLTSLLPASR.

This sequence belongs to the EMC7 family.

The protein localises to the membrane. The polypeptide is ER membrane protein complex subunit 7 homolog (Arabidopsis thaliana (Mouse-ear cress)).